We begin with the raw amino-acid sequence, 161 residues long: Regulator of ribonuclease activity A (161 aa).

Belongs to the RraA family. Homotrimer. Binds to both RNA-binding sites in the C-terminal region of Rne and to RhlB.

It localises to the cytoplasm. Globally modulates RNA abundance by binding to RNase E (Rne) and regulating its endonucleolytic activity. Can modulate Rne action in a substrate-dependent manner by altering the composition of the degradosome. Modulates RNA-binding and helicase activities of the degradosome. This Shigella flexneri serotype 5b (strain 8401) protein is Regulator of ribonuclease activity A.